The following is a 351-amino-acid chain: Histidinol-phosphate aminotransferase (351 aa).

N6-(pyridoxal phosphate)lysine is present on lysine 214.

Belongs to the class-II pyridoxal-phosphate-dependent aminotransferase family. Histidinol-phosphate aminotransferase subfamily. The cofactor is pyridoxal 5'-phosphate.

The catalysed reaction is L-histidinol phosphate + 2-oxoglutarate = 3-(imidazol-4-yl)-2-oxopropyl phosphate + L-glutamate. The protein operates within amino-acid biosynthesis; L-histidine biosynthesis; L-histidine from 5-phospho-alpha-D-ribose 1-diphosphate: step 7/9. In Methanosphaerula palustris (strain ATCC BAA-1556 / DSM 19958 / E1-9c), this protein is Histidinol-phosphate aminotransferase.